A 526-amino-acid chain; its full sequence is Non-reducing end alpha-L-arabinofuranosidase BoGH43A (526 aa).

A signal peptide spans 1–20 (MRNALFLIFISLCSVCKSSA). The Proton acceptor role is filled by aspartate 34. Glutamate 189 serves as the catalytic Proton donor.

This sequence belongs to the glycosyl hydrolase 43 family.

It localises to the periplasm. It carries out the reaction Hydrolysis of terminal non-reducing alpha-L-arabinofuranoside residues in alpha-L-arabinosides.. It participates in glucan metabolism; xyloglucan degradation. In terms of biological role, alpha-L-arabinofuranosidase involved in xyloglucan degradation by mediating the cleavage of terminal non-reducing alpha-L-arabinofuranoside residues in xyloglucan branches, converting the 'S' units to 'X' units. The sequence is that of Non-reducing end alpha-L-arabinofuranosidase BoGH43A from Bacteroides ovatus (strain ATCC 8483 / DSM 1896 / JCM 5824 / BCRC 10623 / CCUG 4943 / NCTC 11153).